The sequence spans 272 residues: Digeranylgeranylglyceryl phosphate synthase (272 aa).

The next 8 helical transmembrane spans lie at 16-36 (AFIA…EIIL), 79-99 (ALYY…IISL), 100-120 (ENGI…YDLK), 124-144 (FIGN…GGLI), 148-168 (VNLG…REII), 194-214 (AVML…LLYY), 217-237 (IFSI…VYSA), and 252-272 (ISKY…MGAL).

The protein belongs to the UbiA prenyltransferase family. DGGGP synthase subfamily. It depends on Mg(2+) as a cofactor.

The protein localises to the cell membrane. The catalysed reaction is sn-3-O-(geranylgeranyl)glycerol 1-phosphate + (2E,6E,10E)-geranylgeranyl diphosphate = 2,3-bis-O-(geranylgeranyl)-sn-glycerol 1-phosphate + diphosphate. Its pathway is membrane lipid metabolism; glycerophospholipid metabolism. Prenyltransferase that catalyzes the transfer of the geranylgeranyl moiety of geranylgeranyl diphosphate (GGPP) to the C2 hydroxyl of (S)-3-O-geranylgeranylglyceryl phosphate (GGGP). This reaction is the second ether-bond-formation step in the biosynthesis of archaeal membrane lipids. The sequence is that of Digeranylgeranylglyceryl phosphate synthase from Methanosphaera stadtmanae (strain ATCC 43021 / DSM 3091 / JCM 11832 / MCB-3).